The following is a 379-amino-acid chain: MAKRDYYEILGVSKTAEEREIKKAYKRLAMKYHPDRNQGDKEAEAKFKEIKEAYEVLTDAQKRAAYDQYGHAAFEQGGMGGGFGGGFNGGADFSDIFGDVFGDIFGGGRGRQRAARGADLRYNMDLTLEEAVRGVTKEIRIPTLEECDVCHGSGAKAGTQPQTCPTCHGSGQVQMRQGFFAVQQTCPHCQGRGTLIKDPCHKCHGHGRVEKSKTLSVKIPAGVDTGDRIRLAGEGEAGEHGAPAGDLYVQVQVKQHPIFEREGNNLYCEVPINFAMAALGGEIEVPTLDGRVMLKVPSETQTGKLFRMRGKGVKSVRGGAQGDLLCRVVVETPVGLSEKQKQLLKDLQESFGGPTGEKNSPRSKSFFDGVKKFFDDLTR.

One can recognise a J domain in the interval 5–70 (DYYEILGVSK…QKRAAYDQYG (66 aa)). Residues 134–212 (GVTKEIRIPT…CHGHGRVEKS (79 aa)) form a CR-type zinc finger. Zn(2+)-binding residues include C147, C150, C164, C167, C186, C189, C200, and C203. CXXCXGXG motif repeat units lie at residues 147-154 (CDVCHGSG), 164-171 (CPTCHGSG), 186-193 (CPHCQGRG), and 200-207 (CHKCHGHG).

The protein belongs to the DnaJ family. In terms of assembly, homodimer. The cofactor is Zn(2+).

The protein resides in the cytoplasm. Functionally, participates actively in the response to hyperosmotic and heat shock by preventing the aggregation of stress-denatured proteins and by disaggregating proteins, also in an autonomous, DnaK-independent fashion. Unfolded proteins bind initially to DnaJ; upon interaction with the DnaJ-bound protein, DnaK hydrolyzes its bound ATP, resulting in the formation of a stable complex. GrpE releases ADP from DnaK; ATP binding to DnaK triggers the release of the substrate protein, thus completing the reaction cycle. Several rounds of ATP-dependent interactions between DnaJ, DnaK and GrpE are required for fully efficient folding. Also involved, together with DnaK and GrpE, in the DNA replication of plasmids through activation of initiation proteins. In Salmonella agona (strain SL483), this protein is Chaperone protein DnaJ.